We begin with the raw amino-acid sequence, 108 residues long: Translation initiation factor 1A (108 aa).

An S1-like domain is found at 10 to 84 (IRVITPNKKS…EKGDIIYRYT (75 aa)).

Belongs to the eIF-1A family.

Seems to be required for maximal rate of protein biosynthesis. Enhances ribosome dissociation into subunits and stabilizes the binding of the initiator Met-tRNA(I) to 40 S ribosomal subunits. The polypeptide is Translation initiation factor 1A (Picrophilus torridus (strain ATCC 700027 / DSM 9790 / JCM 10055 / NBRC 100828 / KAW 2/3)).